The primary structure comprises 428 residues: Delta-aminolevulinic acid dehydratase, chloroplastic (428 aa).

The active-site Schiff-base intermediate with substrate is the Lys294. 5-aminolevulinate contacts are provided by Arg304 and Lys316. Glu332 provides a ligand contact to Mg(2+). Lys347 functions as the Schiff-base intermediate with substrate in the catalytic mechanism. Residues Ser373 and Tyr412 each coordinate 5-aminolevulinate.

Belongs to the ALAD family. As to quaternary structure, homooctamer. Requires Mg(2+) as cofactor.

The protein resides in the plastid. Its subcellular location is the chloroplast. The catalysed reaction is 2 5-aminolevulinate = porphobilinogen + 2 H2O + H(+). Its pathway is porphyrin-containing compound metabolism; protoporphyrin-IX biosynthesis; coproporphyrinogen-III from 5-aminolevulinate: step 1/4. Catalyzes an early step in the biosynthesis of tetrapyrroles. Binds two molecules of 5-aminolevulinate per subunit, each at a distinct site, and catalyzes their condensation to form porphobilinogen. The protein is Delta-aminolevulinic acid dehydratase, chloroplastic (HEMB) of Hordeum vulgare (Barley).